Consider the following 499-residue polypeptide: Uridine-cytidine kinase A (499 aa).

The disordered stretch occupies residues 1 to 44; the sequence is MSDNSTTKVTTNDSPSLTTTTSTTTAPTTTTTTTTTPTHNHDTT. Positions 10-38 are enriched in low complexity; the sequence is TTNDSPSLTTTTSTTTAPTTTTTTTTTPT. ATP is bound at residue 78 to 85; it reads GGSASGKT.

The protein belongs to the uridine kinase family.

The enzyme catalyses uridine + ATP = UMP + ADP + H(+). The catalysed reaction is cytidine + ATP = CMP + ADP + H(+). It functions in the pathway pyrimidine metabolism; CTP biosynthesis via salvage pathway; CTP from cytidine: step 1/3. Its pathway is pyrimidine metabolism; UMP biosynthesis via salvage pathway; UMP from uridine: step 1/1. Catalyzes the conversion of uridine into uridine monophosphate and cytidine into cytidine monophosphate in the pyrimidine salvage pathway. This Dictyostelium discoideum (Social amoeba) protein is Uridine-cytidine kinase A (udkA).